The primary structure comprises 1366 residues: DNA-directed RNA polymerase subunit beta' (1366 aa).

A compositionally biased stretch (basic residues) spans 1–23; sequence MTSSKPKKSSRVRKTTKNSKKNH. Residues 1–37 are disordered; that stretch reads MTSSKPKKSSRVRKTTKNSKKNHNTMMPLLPKTPPSF. Cys248, Cys315, Cys322, and Cys325 together coordinate Zn(2+). Positions 1304 to 1366 are disordered; the sequence is TAILDDPSDE…LQEEGLLSDG (63 aa). The span at 1354–1366 shows a compositional bias: low complexity; that stretch reads LEGLQEEGLLSDG.

This sequence belongs to the RNA polymerase beta' chain family. RpoC2 subfamily. In cyanobacteria the RNAP catalytic core is composed of 2 alpha, 1 beta, 1 beta', 1 gamma and 1 omega subunit. When a sigma factor is associated with the core the holoenzyme is formed, which can initiate transcription. The cofactor is Zn(2+).

The catalysed reaction is RNA(n) + a ribonucleoside 5'-triphosphate = RNA(n+1) + diphosphate. DNA-dependent RNA polymerase catalyzes the transcription of DNA into RNA using the four ribonucleoside triphosphates as substrates. In Prochlorococcus marinus subsp. pastoris (strain CCMP1986 / NIES-2087 / MED4), this protein is DNA-directed RNA polymerase subunit beta'.